A 137-amino-acid polypeptide reads, in one-letter code: Nucleoside diphosphate kinase (137 aa).

ATP-binding residues include Lys-10, Phe-58, Arg-86, Thr-92, Arg-103, and Asn-113. His-116 serves as the catalytic Pros-phosphohistidine intermediate.

Belongs to the NDK family. In terms of assembly, homotetramer. Mg(2+) serves as cofactor.

It is found in the cytoplasm. The enzyme catalyses a 2'-deoxyribonucleoside 5'-diphosphate + ATP = a 2'-deoxyribonucleoside 5'-triphosphate + ADP. It carries out the reaction a ribonucleoside 5'-diphosphate + ATP = a ribonucleoside 5'-triphosphate + ADP. Its function is as follows. Major role in the synthesis of nucleoside triphosphates other than ATP. The ATP gamma phosphate is transferred to the NDP beta phosphate via a ping-pong mechanism, using a phosphorylated active-site intermediate. This Helicobacter acinonychis (strain Sheeba) protein is Nucleoside diphosphate kinase.